The sequence spans 393 residues: Phospho-N-acetylmuramoyl-pentapeptide-transferase (393 aa).

Helical transmembrane passes span 29–49 (RAVMSAMTALLLGLVFGPWVI), 75–95 (TPTMGGVLILLSIAVSTLLWF), 101–121 (FVWVVMLVTFGFGAIGWVDDW), 138–158 (YLWQSLIGLVAAIYLAFSVSE), 194–214 (VSYPLGVFGFIFLTYFVIVGA), 226–246 (GLAIMPVVLVGSALGLFAYVT), 263–283 (AGELLIFCAAMAGAGLAFLWF), 290–310 (VFMGDVGALALGGALGTIAVI), 315–335 (IVLGIMGGIFVVEALSVMAQV), and 370–390 (QVVVRFWIITMLLCLVGLSTL).

The protein belongs to the glycosyltransferase 4 family. MraY subfamily. Mg(2+) is required as a cofactor.

Its subcellular location is the cell inner membrane. It catalyses the reaction UDP-N-acetyl-alpha-D-muramoyl-L-alanyl-gamma-D-glutamyl-meso-2,6-diaminopimeloyl-D-alanyl-D-alanine + di-trans,octa-cis-undecaprenyl phosphate = di-trans,octa-cis-undecaprenyl diphospho-N-acetyl-alpha-D-muramoyl-L-alanyl-D-glutamyl-meso-2,6-diaminopimeloyl-D-alanyl-D-alanine + UMP. The protein operates within cell wall biogenesis; peptidoglycan biosynthesis. Its function is as follows. Catalyzes the initial step of the lipid cycle reactions in the biosynthesis of the cell wall peptidoglycan: transfers peptidoglycan precursor phospho-MurNAc-pentapeptide from UDP-MurNAc-pentapeptide onto the lipid carrier undecaprenyl phosphate, yielding undecaprenyl-pyrophosphoryl-MurNAc-pentapeptide, known as lipid I. This chain is Phospho-N-acetylmuramoyl-pentapeptide-transferase, found in Leptothrix cholodnii (strain ATCC 51168 / LMG 8142 / SP-6) (Leptothrix discophora (strain SP-6)).